The chain runs to 185 residues: Pap fimbrial major pilin protein (185 aa).

The first 22 residues, 1–22, serve as a signal peptide directing secretion; it reads MIKSVIAGAVAMAVVSFGVNNA. Cys-44 and Cys-83 are disulfide-bonded.

This sequence belongs to the fimbrial protein family.

Its subcellular location is the secreted. It localises to the fimbrium. Functionally, polymerizes to form the thick (6.8 nm in diameter) rod of the pilus (also called fimbria). The rod is a right-handed helical cylinder with 3.28 PapA subunits per turn. Pili are polar filaments radiating from the surface of the bacterium to a length of 0.5-1.5 micrometers and numbering 100-300 per cell, and enable bacteria to colonize the epithelium of specific host organs. This chain is Pap fimbrial major pilin protein (papA), found in Escherichia coli.